The sequence spans 917 residues: Protein translocase subunit SecA (917 aa).

Residues glutamine 87, 105-109 (GEGKT), and aspartate 516 contribute to the ATP site. The Zn(2+) site is built by cysteine 901, cysteine 903, cysteine 912, and histidine 913.

The protein belongs to the SecA family. In terms of assembly, monomer and homodimer. Part of the essential Sec protein translocation apparatus which comprises SecA, SecYEG and auxiliary proteins SecDF-YajC and YidC. Zn(2+) is required as a cofactor.

The protein resides in the cell inner membrane. The protein localises to the cytoplasm. The catalysed reaction is ATP + H2O + cellular proteinSide 1 = ADP + phosphate + cellular proteinSide 2.. In terms of biological role, part of the Sec protein translocase complex. Interacts with the SecYEG preprotein conducting channel. Has a central role in coupling the hydrolysis of ATP to the transfer of proteins into and across the cell membrane, serving both as a receptor for the preprotein-SecB complex and as an ATP-driven molecular motor driving the stepwise translocation of polypeptide chains across the membrane. The polypeptide is Protein translocase subunit SecA (Verminephrobacter eiseniae (strain EF01-2)).